Consider the following 241-residue polypeptide: MHLSTHPTSYPTRYQEIAAKLEQELRQHYRCGDYLPAEQQLAARFEVNRHTLRRAIDQLVEKGWVQRRQGVGVLVLMRPFDYPLNAQARFSQNLLDQGSHPTSEKLLSVLRPASGHVADALGITEGENVIHLRTLRRVNGVALCLIDHYFADLTLWPTLQRFDSGSLHDFLREQTGIALRRSQTRISARRAQAKECQRLEIPNMSPLLCVRTLNHRDGESSPAEYSVSLTRADMIEFTMEH.

Residues 11–78 enclose the HTH gntR-type domain; that stretch reads PTRYQEIAAK…QGVGVLVLMR (68 aa). The segment at residues 38-57 is a DNA-binding region (H-T-H motif); it reads EQQLAARFEVNRHTLRRAID.

Functionally, belongs to an operon involved in alkylphosphonate uptake and C-P lyase. Exact function not known. By similarity could be a transcriptional regulator. This chain is Probable transcriptional regulator PhnF (phnF), found in Escherichia coli (strain K12).